The following is a 686-amino-acid chain: Endonuclease GajA (686 aa).

The interval M1–T423 is ATPase domain. N52–T56 contributes to the ATP binding site. Positions F463–T599 are toprim domain. Positions 472, 476, 559, and 604 each coordinate a divalent metal cation.

As to quaternary structure, homotetramer. Forms the core of the anti-phage defense complex. Interacts with GajB; 2 GajB dimers dock at opposite sides of the GajA complex to form a 4:4 GajA-GajB assembly (GajAB). GajAB interacts with Bacillus phage Phi3T Gad1 protein; this interaction forms a 4:4:8 GajAB-Gad1 complex and leads to GajAB inhibition. It depends on Mg(2+) as a cofactor.

In terms of biological role, component of antiviral defense system Gabija type II, composed of GajA and GajB. Probably a nicking endonuclease that is strongly inhibited by physiological levels of nucleotides (NTP and dNTP). Expression of Gabija type II in B.subtilis (strain BEST7003) confers resistance to phages phi105, and SpBeta. During viral replication, when nucleotides are rapidly consumed, it is de-suppressed and degrades target DNA. This chain is Endonuclease GajA, found in Bacillus cereus (strain HuB5-5).